A 758-amino-acid chain; its full sequence is MKRRYSILIILLVAIFYRMITFRFKYLLGYDPYFHLAYIEEVNKVGKWINFLTFAGGPWGYQVKLFHPLGLWMTPLYLYKLLKVFGVSLTTTFKITPVIFGVLTVIFLYLSLLKLYDEKRAFFGGFFLAISYGHVFRSMANYYRGDNYMLFWYSVALLGISLALGIKKGKWKYKRLIFYTLPVLASGFSAIFWQAYYPIFAFLLSNALLLAVGAFILKKDKYLLDSIILILSTAFGVLLANYLGGIFGYGMLGYAKWLGKSVAKKLGLEFGYLKDVYLILHLKYLVPISLSFVLVLILLGFLTKDIRIRSLFLGIASFIGIIILFKRFEALKELSTGFGIFKEAPILETQPTSFKDLWAAFSLSFFLTPLFFIRFKKPRVEDFLTLGLIIPSVYMLKTWTRFLFIGSMAIAIMSGIGIVELYEAIKPRLNGKKALATGIITLVILPGVIAGLSFKEVCSLHPEMNEAWERALKWLKNNSNENDVILAWWDWGHFITYYARRSPIAQGGPSVGVALYLLGKLNENWAINLGVDYVIVSYYDFLKFGAILSTANLSKRYNIRGYGLVVLPLRASTGALIFENRGYRAIVRHDKSWNAVIIYNGQMIYPRKLYVEHKEGVQEIKPPESNSNTYLYVNLNYGYAIFMNGNAFNTTLVRLFITPEKPYKLVYSDGGLIKIFKLEHPNVKVERRESNVILNFENGTSLGLYFFLDNGTMVLSKWYNVKGKNEFIVPKVNASVARYVLKRGKKVVDRGVFRLSYN.

At 1-6 (MKRRYS) the chain is on the cytoplasmic side. Residues 7–27 (ILIILLVAIFYRMITFRFKYL) traverse the membrane as a helical segment. At 28–92 (LGYDPYFHLA…KVFGVSLTTT (65 aa)) the chain is on the extracellular side. The DXD motif 1 motif lies at 29–31 (GYD). Mn(2+) is bound at residue D31. Residues 93–113 (FKITPVIFGVLTVIFLYLSLL) form a helical membrane-spanning segment. The Cytoplasmic segment spans residues 114 to 120 (KLYDEKR). A helical membrane pass occupies residues 121–141 (AFFGGFFLAISYGHVFRSMAN). Residues 142-145 (YYRG) lie on the Extracellular side of the membrane. Positions 144 and 146 each coordinate Mn(2+). A DXD motif 2 motif is present at residues 144 to 146 (RGD). The helical transmembrane segment at 146–166 (DNYMLFWYSVALLGISLALGI) threads the bilayer. At 167-175 (KKGKWKYKR) the chain is on the cytoplasmic side. Helical transmembrane passes span 176-196 (LIFY…WQAY) and 197-217 (YPIF…AFIL). At 218-226 (KKDKYLLDS) the chain is on the cytoplasmic side. Residues 227 to 247 (IILILSTAFGVLLANYLGGIF) form a helical membrane-spanning segment. Residues 248–281 (GYGMLGYAKWLGKSVAKKLGLEFGYLKDVYLILH) lie on the Extracellular side of the membrane. A helical membrane pass occupies residues 282-302 (LKYLVPISLSFVLVLILLGFL). The Cytoplasmic segment spans residues 303–310 (TKDIRIRS). The helical transmembrane segment at 311-331 (LFLGIASFIGIIILFKRFEAL) threads the bilayer. Topologically, residues 332-352 (KELSTGFGIFKEAPILETQPT) are extracellular. The TIXE motif motif lies at 340–343 (IFKE). A helical transmembrane segment spans residues 353–373 (SFKDLWAAFSLSFFLTPLFFI). Topologically, residues 374–379 (RFKKPR) are cytoplasmic. Residues 380 to 400 (VEDFLTLGLIIPSVYMLKTWT) form a helical membrane-spanning segment. A topological domain (extracellular) is located at residue R401. R401 lines the a glycophospholipid pocket. Residues 402-422 (FLFIGSMAIAIMSGIGIVELY) traverse the membrane as a helical segment. Residues 423-433 (EAIKPRLNGKK) are Cytoplasmic-facing. A helical membrane pass occupies residues 434–454 (ALATGIITLVILPGVIAGLSF). Residues 455–758 (KEVCSLHPEM…DRGVFRLSYN (304 aa)) lie on the Extracellular side of the membrane. The segment at 488–490 (WWD) is interacts with target acceptor peptide in protein substrate. A WWDYG motif motif is present at residues 488–492 (WWDWG). The short motif at 540–547 (DFLKFGAI) is the DK motif element.

This sequence belongs to the STT3 family. Mn(2+) is required as a cofactor. The cofactor is Mg(2+).

It is found in the cell membrane. The catalysed reaction is an archaeal dolichyl phosphooligosaccharide + [protein]-L-asparagine = an archaeal dolichyl phosphate + a glycoprotein with the oligosaccharide chain attached by N-beta-D-glycosyl linkage to a protein L-asparagine.. The protein operates within protein modification; protein glycosylation. Functionally, oligosaccharyl transferase (OST) that catalyzes the initial transfer of a defined glycan (ManNAcXyl(2)GlcAMan(2)GalNAc in Pyrococcus) from the lipid carrier dolichol-monophosphate to an asparagine residue within an Asn-X-Ser/Thr consensus motif in nascent polypeptide chains, the first step in protein N-glycosylation. In Pyrococcus horikoshii (strain ATCC 700860 / DSM 12428 / JCM 9974 / NBRC 100139 / OT-3), this protein is Dolichyl-phosphooligosaccharide-protein glycotransferase 2 (aglB2).